Consider the following 302-residue polypeptide: Thioredoxin-like protein CDSP32, chloroplastic (302 aa).

A chloroplast-targeting transit peptide spans 1-56 (MATVANFLAKPISTVVPRPSSAVASTSSFVFFNHKTNPLFRRKNLPKRLFSAVKIK). Residues 163-298 (HEEEGIEPDQ…IGEILRYSGV (136 aa)) form the Thioredoxin domain. Catalysis depends on nucleophile residues Cys-219 and Cys-222. A disulfide bridge links Cys-219 with Cys-222.

Belongs to the thioredoxin family. As to quaternary structure, interacts with the plastidial peroxiredoxin BAS1.

It localises to the plastid. The protein resides in the chloroplast stroma. Probable thiol-disulfide oxidoreductase involved in resistance to oxidative stress. May participate in the reduction of alkyl hydroperoxides derived from oxidative stress by acting as a physiological electron donor to the BAS1 peroxiredoxin. May regenerate methionine sulfoxide reductase B1 (MSRB1) activity through sulfenic acid reduction. The polypeptide is Thioredoxin-like protein CDSP32, chloroplastic (CDSP32) (Arabidopsis thaliana (Mouse-ear cress)).